The following is a 142-amino-acid chain: MKTFVAKPETVKRDWYVVDAEGKTLGRLASEIASRLRGKHKAEYTPHVDTGDYIIVINAEKVTVTGNKAAAKTYYRHTEFPGGIKSITFDKLIVRKPEMVIELAVKGMLPRGPLGRAMYRKLKVYAGAEHNHVAQQPKVLDI.

The protein belongs to the universal ribosomal protein uL13 family. As to quaternary structure, part of the 50S ribosomal subunit.

In terms of biological role, this protein is one of the early assembly proteins of the 50S ribosomal subunit, although it is not seen to bind rRNA by itself. It is important during the early stages of 50S assembly. The chain is Large ribosomal subunit protein uL13 from Vibrio vulnificus (strain CMCP6).